We begin with the raw amino-acid sequence, 60 residues long: UPF0434 protein YE1549 (60 aa).

The protein belongs to the UPF0434 family.

This Yersinia enterocolitica serotype O:8 / biotype 1B (strain NCTC 13174 / 8081) protein is UPF0434 protein YE1549.